The chain runs to 361 residues: Chorismate synthase (361 aa).

Arg-48 is an NADP(+) binding site. FMN is bound by residues 126 to 128, Gly-269, 302 to 306, and Asn-328; these read RSS and KPVPS.

This sequence belongs to the chorismate synthase family. Homotetramer. FMNH2 is required as a cofactor.

It carries out the reaction 5-O-(1-carboxyvinyl)-3-phosphoshikimate = chorismate + phosphate. Its pathway is metabolic intermediate biosynthesis; chorismate biosynthesis; chorismate from D-erythrose 4-phosphate and phosphoenolpyruvate: step 7/7. Its function is as follows. Catalyzes the anti-1,4-elimination of the C-3 phosphate and the C-6 proR hydrogen from 5-enolpyruvylshikimate-3-phosphate (EPSP) to yield chorismate, which is the branch point compound that serves as the starting substrate for the three terminal pathways of aromatic amino acid biosynthesis. This reaction introduces a second double bond into the aromatic ring system. This chain is Chorismate synthase, found in Treponema denticola (strain ATCC 35405 / DSM 14222 / CIP 103919 / JCM 8153 / KCTC 15104).